Reading from the N-terminus, the 662-residue chain is DCC-interacting protein 13-beta (662 aa).

One can recognise a BAR domain in the interval 3–268; sequence AVDKLLLEEA…ESVYTPDIDV (266 aa). Residues 277 to 375 enclose the PH domain; sequence LIQKTGYLNL…WICAINNISR (99 aa). The 150-residue stretch at 486–635 folds into the PID domain; the sequence is SLLQQMFIVR…LMLSVPLTND (150 aa). Positions 643 to 662 are disordered; the sequence is DQADDTGGSPSDHRGAESEA. Positions 653 to 662 are enriched in basic and acidic residues; that stretch reads SDHRGAESEA.

In terms of assembly, homodimer. Homotetramer. Binds RAB5A/Rab5 through an N-terminal domain. This interaction is essential for its recruitment to endosomal membranes as well as its role in cell proliferation. Binds subunits of the NuRD/MeCP1 complex. Interacts with FSHR; interaction is independent of follicle stimulating hormone stimulation. Interacts with APPL1; the interaction is decreased by adiponectin in a time-dependent manner. Forms a complex comprising APPL1, RUVBL2, CTNNB1, HDAC1 and HDAC2; interaction reduces interaction between CTNNB1, HDAC1, HDAC2 and RUVBL2 leading to the decrease of deacetylase activity of this complex; affects the recruitment of repressive complexes to the Wnt target genes. Interacts (via BAR domain) with TBC1D1; interaction is dependent of TBC1D1 phosphorylation at 'Ser-235'; interaction diminishes the phosphorylation of TBC1D1 at 'Thr-596', resulting in inhibition of SLC2A4 translocation and glucose uptake. Interacts with ANXA2; targets APPL2 to endosomes and acting in parallel to RAB5A. Interacts with RAB31 (in GTP-bound form); interaction contributes to or enhances recruitment of APPL2 to the phagosomes; interaction enhances Fc-gamma receptor-mediated phagocytosis through PI3K/Akt signaling in macrophages. Interacts with PIK3R1; forms a complex with PIK3R1 and APPL1. Interacts (via BAR domain) with ADIPOR1; hinders the accessibility of APPL1 to ADIPOR1; negatively regulates adiponectin signaling; ADIPOQ dissociates this interaction and facilitates the recruitment of APPL1 to ADIPOR1. Interacts (via BAR domain) with ADIPOR2; ADIPOQ dissociates this interaction.

The protein localises to the early endosome membrane. Its subcellular location is the nucleus. The protein resides in the cell membrane. It is found in the endosome membrane. It localises to the cytoplasm. The protein localises to the cytoplasmic vesicle. Its subcellular location is the phagosome. The protein resides in the cell projection. It is found in the ruffle. It localises to the ruffle membrane. The protein localises to the phagosome membrane. In terms of biological role, multifunctional adapter protein that binds to various membrane receptors, nuclear factors and signaling proteins to regulate many processes, such as cell proliferation, immune response, endosomal trafficking and cell metabolism. Regulates signaling pathway leading to cell proliferation through interaction with RAB5A and subunits of the NuRD/MeCP1 complex. Plays a role in immune response by modulating phagocytosis, inflammatory and innate immune responses. In macrophages, enhances Fc-gamma receptor-mediated phagocytosis through interaction with RAB31 leading to activation of PI3K/Akt signaling. In response to LPS, modulates inflammatory responses by playing a key role on the regulation of TLR4 signaling and in the nuclear translocation of RELA/NF-kappa-B p65 and the secretion of pro- and anti-inflammatory cytokines. Also functions as a negative regulator of innate immune response via inhibition of AKT1 signaling pathway by forming a complex with APPL1 and PIK3R1. Plays a role in endosomal trafficking of TGFBR1 from the endosomes to the nucleus. Plays a role in cell metabolism by regulating adiponecting ans insulin signaling pathways and adaptative thermogenesis. In muscle, negatively regulates adiponectin-simulated glucose uptake and fatty acid oyidation by inhibiting adiponectin signaling pathway through APPL1 sequestration thereby antagonizing APPL1 action. In muscles, negatively regulates insulin-induced plasma membrane recruitment of GLUT4 and glucose uptake through interaction with TBC1D1. Plays a role in cold and diet-induced adaptive thermogenesis by activating ventromedial hypothalamus (VMH) neurons throught AMPK inhibition which enhances sympathetic outflow to subcutaneous white adipose tissue (sWAT), sWAT beiging and cold tolerance. Also plays a role in other signaling pathways namely Wnt/beta-catenin, HGF and glucocorticoid receptor signaling. Positive regulator of beta-catenin/TCF-dependent transcription through direct interaction with RUVBL2/reptin resulting in the relief of RUVBL2-mediated repression of beta-catenin/TCF target genes by modulating the interactions within the beta-catenin-reptin-HDAC complex. May affect adult neurogenesis in hippocampus and olfactory system via regulating the sensitivity of glucocorticoid receptor. Required for fibroblast migration through HGF cell signaling. The sequence is that of DCC-interacting protein 13-beta from Rattus norvegicus (Rat).